Consider the following 704-residue polypeptide: Elongation factor G (704 aa).

The region spanning 8 to 290 is the tr-type G domain; that stretch reads ARYRNIGISA…AVIDYLPSPV (283 aa). GTP is bound by residues 17-24, 88-92, and 142-145; these read AHIDAGKT, DTPGH, and NKMD.

The protein belongs to the TRAFAC class translation factor GTPase superfamily. Classic translation factor GTPase family. EF-G/EF-2 subfamily.

The protein resides in the cytoplasm. Functionally, catalyzes the GTP-dependent ribosomal translocation step during translation elongation. During this step, the ribosome changes from the pre-translocational (PRE) to the post-translocational (POST) state as the newly formed A-site-bound peptidyl-tRNA and P-site-bound deacylated tRNA move to the P and E sites, respectively. Catalyzes the coordinated movement of the two tRNA molecules, the mRNA and conformational changes in the ribosome. In Salmonella agona (strain SL483), this protein is Elongation factor G.